The chain runs to 1010 residues: Importin-8 (1010 aa).

Residues 22–102 (AETELNQSYK…RDNIVEGIIR (81 aa)) enclose the Importin N-terminal domain. A compositionally biased stretch (basic and acidic residues) spans 886–895 (NHSKAEKVDI). The tract at residues 886–932 (NHSKAEKVDIEENEEISSEEEEETSVSAQAMQSQIGRSEEEDDDDWD) is disordered. Over residues 896–909 (EENEEISSEEEEET) the composition is skewed to acidic residues. A phosphoserine mark is found at Ser-902 and Ser-903. The segment covering 910–921 (SVSAQAMQSQIG) has biased composition (polar residues).

This sequence belongs to the importin beta family. Forms a heterodimer with KPNB1. Interacts with SRP19. Interacts with RPL23A. Binds directly to nuclear pore complexes. Interacts with LRPPRC; the interaction occurs when LRPPRC is in its RNA-free form and promotes import of LRPPRC to the nucleus to allow for EIF4E-mediated export of mRNAS from the nucleus to the cytoplasm.

Its subcellular location is the cytoplasm. It localises to the nucleus. Its function is as follows. Involved in nuclear protein import, either by acting as autonomous nuclear transport receptor or as an adapter-like protein in association with the importin-beta subunit KPNB1. Acting autonomously, may serve as receptor for nuclear localization signals (NLS) and promote translocation of import substrates through the nuclear pore complex (NPC) by an energy requiring, Ran-dependent mechanism. At the nucleoplasmic side of the NPC, Ran binds to importin, the importin/substrate complex dissociates and importin is re-exported from the nucleus to the cytoplasm where GTP hydrolysis releases Ran. The directionality of nuclear import is thought to be conferred by an asymmetric distribution of the GTP- and GDP-bound forms of Ran between the cytoplasm and nucleus. In vitro mediates the nuclear import of the signal recognition particle protein SRP19. May also be involved in cytoplasm-to-nucleus shuttling of a broad spectrum of other cargos, including Argonaute-microRNAs complexes, the JUN protein, RELA/NF-kappa-B p65 subunit, the translation initiation factor EIF4E and a set of receptor-activated mothers against decapentaplegic homolog (SMAD) transcription factors that play a critical role downstream of the large family of transforming growth factor beta and bone morphogenetic protein (BMP) cytokines. This Mus musculus (Mouse) protein is Importin-8.